The sequence spans 614 residues: Glutamine--fructose-6-phosphate aminotransferase [isomerizing] (614 aa).

Catalysis depends on Cys2, which acts as the Nucleophile; for GATase activity. Residues 2–223 (CGIIGYIGRR…DGEMAVVTRD (222 aa)) enclose the Glutamine amidotransferase type-2 domain. 2 consecutive SIS domains span residues 292–431 (YLDR…GRTI) and 463–604 (IAVK…VDRP). The active-site For Fru-6P isomerization activity is the Lys609.

Homodimer.

The protein resides in the cytoplasm. The catalysed reaction is D-fructose 6-phosphate + L-glutamine = D-glucosamine 6-phosphate + L-glutamate. Functionally, catalyzes the first step in hexosamine metabolism, converting fructose-6P into glucosamine-6P using glutamine as a nitrogen source. The sequence is that of Glutamine--fructose-6-phosphate aminotransferase [isomerizing] from Chlorobaculum tepidum (strain ATCC 49652 / DSM 12025 / NBRC 103806 / TLS) (Chlorobium tepidum).